Consider the following 133-residue polypeptide: Small ribosomal subunit protein uS8 (133 aa).

It belongs to the universal ribosomal protein uS8 family. Part of the 30S ribosomal subunit. Contacts proteins S5 and S12.

Its function is as follows. One of the primary rRNA binding proteins, it binds directly to 16S rRNA central domain where it helps coordinate assembly of the platform of the 30S subunit. The chain is Small ribosomal subunit protein uS8 from Oenococcus oeni (strain ATCC BAA-331 / PSU-1).